A 185-amino-acid polypeptide reads, in one-letter code: Ribosome-recycling factor (185 aa).

The protein belongs to the RRF family.

The protein localises to the cytoplasm. Functionally, responsible for the release of ribosomes from messenger RNA at the termination of protein biosynthesis. May increase the efficiency of translation by recycling ribosomes from one round of translation to another. The sequence is that of Ribosome-recycling factor from Histophilus somni (strain 2336) (Haemophilus somnus).